The following is a 78-amino-acid chain: Alpha-amylase inhibitor Haim-1 (78 aa).

Cystine bridges form between cysteine 11/cysteine 27 and cysteine 45/cysteine 72.

In terms of biological role, inhibits mammalian alpha-amylases specifically but has no action on plant and microbial alpha-amylases. The polypeptide is Alpha-amylase inhibitor Haim-1 (Streptomyces griseosporeus).